Consider the following 296-residue polypeptide: MLYQQIASNKRKTVVLLIVFFCLLAAIGAAVGYLVLGSYQFGLVLALIIGVIYAVSMIFQSTNVVMSMNNAREVTEDEAPNYFHIVEDMAMVAQIPMPRVFIVEDDSLNAFATGSKPENAAVAATTGLLAVMNREELEGVIGHEVSHIRNYDIRISTIAVALASAVTLISSIGSRMLFYGGGRRRDDDREDGGNILVLIFSILSLILAPLAASLVQLAISRQREYLADASSVELTRNPQGMISALEKLDRSEPMGHPVDDASAALYINDPTKKEGLKSLFYTHPPIADRIERLRHM.

Helical transmembrane passes span 14–34 and 39–59; these read VVLL…VGYL and YQFG…SMIF. Residue His143 participates in Zn(2+) binding. Glu144 is a catalytic residue. His147 lines the Zn(2+) pocket. 2 helical membrane passes run 158–178 and 195–215; these read IAVA…RMLF and ILVL…ASLV. Glu224 contributes to the Zn(2+) binding site.

It belongs to the peptidase M48B family. Zn(2+) is required as a cofactor.

The protein resides in the cell membrane. The sequence is that of Protease HtpX homolog from Streptococcus agalactiae serotype III (strain NEM316).